The chain runs to 162 residues: Probable chemoreceptor glutamine deamidase CheD (162 aa).

The protein belongs to the CheD family.

The enzyme catalyses L-glutaminyl-[protein] + H2O = L-glutamyl-[protein] + NH4(+). Its function is as follows. Probably deamidates glutamine residues to glutamate on methyl-accepting chemotaxis receptors (MCPs), playing an important role in chemotaxis. The polypeptide is Probable chemoreceptor glutamine deamidase CheD (Clostridium botulinum (strain Alaska E43 / Type E3)).